Reading from the N-terminus, the 154-residue chain is Probable transcription factor At4g00232 (154 aa).

Residues 1-44 (MDKANTNRSKVCGGSGEAKLTGKKRKNVSAKQSKKDAKKENSQM) are disordered.

This sequence belongs to the GeBP family.

This chain is Probable transcription factor At4g00232, found in Arabidopsis thaliana (Mouse-ear cress).